The primary structure comprises 2357 residues: Myosin-I heavy chain (2357 aa).

Residues 13 to 688 (QPVEDMITLP…QYLKLEELRK (676 aa)) form the Myosin motor domain. An ATP-binding site is contributed by 106 to 113 (GESGAGKT). An actin-binding region spans residues 579 to 586 (YVRCIKPN). Residues 691–720 (LLKKVTLIQSVWRMYRCKKRYQQIRASAKI) enclose the IQ domain. Positions 787–891 (KRDRNARMLE…QDKNINELDD (105 aa)) form a coiled coil. The segment at 787 to 1076 (KRDRNARMLE…PILGAPPPPP (290 aa)) is binding to talin A. Disordered stretches follow at residues 797–852 (IQRE…EEEL) and 974–1112 (ASSF…NPQP). 2 stretches are compositionally biased toward low complexity: residues 1003–1025 (NNNY…SDFS) and 1078–1106 (TSDS…QSTN). The MyTH4 1 domain occupies 1155–1313 (YQKSHIKSSL…PSVTELESIK (159 aa)). The FERM 1 domain maps to 1318–1620 (IFVRITATDG…EYSLYLRNNA (303 aa)). Residues 1618–1678 (NNAKYARALK…PVDHVEILLS (61 aa)) form the SH3 domain. The tract at residues 1686–1849 (VHPVATLSPP…PSKRLTVSPA (164 aa)) is disordered. Residues 1706–1733 (TPPPPPSISDSMSPPPQVGMLPPPPPPS) show a composition bias toward pro residues. Low complexity-rich tracts occupy residues 1734 to 1746 (VMGS…IPSL) and 1755 to 1770 (SSNS…SPMM). Polar residues predominate over residues 1817-1828 (FRSSLRVSMLNT). The region spanning 1894–2051 (FNKDPIKESL…PSATEIQSFR (158 aa)) is the MyTH4 2 domain. The FERM 2 domain maps to 2060–2357 (STCKIRFIDQ…ASVYQFYSSQ (298 aa)).

This sequence belongs to the TRAFAC class myosin-kinesin ATPase superfamily. Myosin family. In terms of assembly, monomer. Interacts with talA.

It localises to the cytoplasm. Its function is as follows. Myosins are actin-based motor molecules with ATPase activity. Involved in the early steps of phagocytosis and adhesion. The chain is Myosin-I heavy chain (myoI) from Dictyostelium discoideum (Social amoeba).